The following is a 182-amino-acid chain: MSEPIQNENVESNVADAADIAAATAATEEFTNTIGDAISTSTEEETFEAAPAVLDGPIWTVGRRKRAIVRVRMVAGSGEITCNGRTLEDYFPNKLHQQLIKAPLVLLGREGQFDIHANLGGGGPTGQAGAFRLAIARALNAYNPAERPTLKKAGFLTRDARAVERKKAGLHKARRAPQYSKR.

This sequence belongs to the universal ribosomal protein uS9 family.

In Corynebacterium efficiens (strain DSM 44549 / YS-314 / AJ 12310 / JCM 11189 / NBRC 100395), this protein is Small ribosomal subunit protein uS9.